Reading from the N-terminus, the 408-residue chain is CinA-like protein (408 aa).

The protein belongs to the CinA family.

The sequence is that of CinA-like protein from Thermotoga neapolitana (strain ATCC 49049 / DSM 4359 / NBRC 107923 / NS-E).